The sequence spans 248 residues: ATP synthase subunit a, chloroplastic (248 aa).

The next 5 helical transmembrane spans lie at 35-55, 94-114, 133-153, 202-222, and 224-244; these read GQVF…AIAG, IPYI…GALI, INTT…AGLS, VFTL…GLFA, and SIQA…ALEG.

The protein belongs to the ATPase A chain family. In terms of assembly, F-type ATPases have 2 components, CF(1) - the catalytic core - and CF(0) - the membrane proton channel. CF(1) has five subunits: alpha(3), beta(3), gamma(1), delta(1), epsilon(1). CF(0) has four main subunits: a, b, b' and c.

The protein resides in the plastid. Its subcellular location is the chloroplast thylakoid membrane. Its function is as follows. Key component of the proton channel; it plays a direct role in the translocation of protons across the membrane. In Antithamnion sp. (Red alga), this protein is ATP synthase subunit a, chloroplastic.